Here is a 299-residue protein sequence, read N- to C-terminus: Epimerase family protein SERP0438 (299 aa).

It belongs to the NAD(P)-dependent epimerase/dehydratase family. SDR39U1 subfamily.

This chain is Epimerase family protein SERP0438, found in Staphylococcus epidermidis (strain ATCC 35984 / DSM 28319 / BCRC 17069 / CCUG 31568 / BM 3577 / RP62A).